Consider the following 509-residue polypeptide: Maturase K (509 aa).

It belongs to the intron maturase 2 family. MatK subfamily.

The protein localises to the plastid. It localises to the chloroplast. Functionally, usually encoded in the trnK tRNA gene intron. Probably assists in splicing its own and other chloroplast group II introns. This Solanum tuberosum (Potato) protein is Maturase K.